A 127-amino-acid polypeptide reads, in one-letter code: Large-conductance mechanosensitive channel (127 aa).

Helical transmembrane passes span 19 to 39 (VGVIVGAAFTAIVNSLVTNII), 42 to 62 (LLGIFVGSIDFSNLVFTVGSA), and 67 to 87 (GAFINSVINFLIIAFVVFLLI).

This sequence belongs to the MscL family. In terms of assembly, homopentamer.

Its subcellular location is the cell membrane. Channel that opens in response to stretch forces in the membrane lipid bilayer. May participate in the regulation of osmotic pressure changes within the cell. The protein is Large-conductance mechanosensitive channel of Levilactobacillus brevis (strain ATCC 367 / BCRC 12310 / CIP 105137 / JCM 1170 / LMG 11437 / NCIMB 947 / NCTC 947) (Lactobacillus brevis).